A 156-amino-acid polypeptide reads, in one-letter code: ATP synthase subunit b (156 aa).

Residues Leu-5 to Val-25 traverse the membrane as a helical segment.

The protein belongs to the ATPase B chain family. As to quaternary structure, F-type ATPases have 2 components, F(1) - the catalytic core - and F(0) - the membrane proton channel. F(1) has five subunits: alpha(3), beta(3), gamma(1), delta(1), epsilon(1). F(0) has three main subunits: a(1), b(2) and c(10-14). The alpha and beta chains form an alternating ring which encloses part of the gamma chain. F(1) is attached to F(0) by a central stalk formed by the gamma and epsilon chains, while a peripheral stalk is formed by the delta and b chains.

It localises to the cell inner membrane. In terms of biological role, f(1)F(0) ATP synthase produces ATP from ADP in the presence of a proton or sodium gradient. F-type ATPases consist of two structural domains, F(1) containing the extramembraneous catalytic core and F(0) containing the membrane proton channel, linked together by a central stalk and a peripheral stalk. During catalysis, ATP synthesis in the catalytic domain of F(1) is coupled via a rotary mechanism of the central stalk subunits to proton translocation. Component of the F(0) channel, it forms part of the peripheral stalk, linking F(1) to F(0). The chain is ATP synthase subunit b from Acinetobacter baumannii (strain SDF).